Reading from the N-terminus, the 444-residue chain is Tubulin beta chain (444 aa).

8 residues coordinate GTP: glutamine 11, glutamate 69, serine 138, glycine 142, threonine 143, glycine 144, asparagine 204, and asparagine 226. Glutamate 69 is a binding site for Mg(2+).

The protein belongs to the tubulin family. As to quaternary structure, dimer of alpha and beta chains. A typical microtubule is a hollow water-filled tube with an outer diameter of 25 nm and an inner diameter of 15 nM. Alpha-beta heterodimers associate head-to-tail to form protofilaments running lengthwise along the microtubule wall with the beta-tubulin subunit facing the microtubule plus end conferring a structural polarity. Microtubules usually have 13 protofilaments but different protofilament numbers can be found in some organisms and specialized cells. Mg(2+) is required as a cofactor.

Its subcellular location is the cytoplasm. It localises to the cytoskeleton. In terms of biological role, tubulin is the major constituent of microtubules, a cylinder consisting of laterally associated linear protofilaments composed of alpha- and beta-tubulin heterodimers. Microtubules grow by the addition of GTP-tubulin dimers to the microtubule end, where a stabilizing cap forms. Below the cap, tubulin dimers are in GDP-bound state, owing to GTPase activity of alpha-tubulin. This is Tubulin beta chain from Euplotoides octocarinatus (Freshwater ciliate).